A 159-amino-acid chain; its full sequence is MSKANKKKKPQSSTIAQNKRARHDYFLETKFEAGVALLGWEVKALRAQRGQMTESYVLVQNGEAWLQGAQIQPLPQACTHYVTEPARPRKLLLNRRELNKIAEAKDQKGYTIVATSLYWKAHMVKCEIAIAKGKQLHDKRQTEKEREWNIQKQRVLYDK.

Belongs to the SmpB family.

It localises to the cytoplasm. Required for rescue of stalled ribosomes mediated by trans-translation. Binds to transfer-messenger RNA (tmRNA), required for stable association of tmRNA with ribosomes. tmRNA and SmpB together mimic tRNA shape, replacing the anticodon stem-loop with SmpB. tmRNA is encoded by the ssrA gene; the 2 termini fold to resemble tRNA(Ala) and it encodes a 'tag peptide', a short internal open reading frame. During trans-translation Ala-aminoacylated tmRNA acts like a tRNA, entering the A-site of stalled ribosomes, displacing the stalled mRNA. The ribosome then switches to translate the ORF on the tmRNA; the nascent peptide is terminated with the 'tag peptide' encoded by the tmRNA and targeted for degradation. The ribosome is freed to recommence translation, which seems to be the essential function of trans-translation. This chain is SsrA-binding protein, found in Saccharophagus degradans (strain 2-40 / ATCC 43961 / DSM 17024).